Reading from the N-terminus, the 469-residue chain is MSRTFYDKLWDDHVIYSEEDGTATIYIDRQLLHEVTSPQAFEGLNLAGRPVWRISANLAVSDHNVPTTDRSEGITDPISKLQVDTLDQNCDAFGITQYKMNDTRQGIVHVIGPEQGATLPGMTVVCGDSHTSTHGAFGALAFGIGTSEVEHVLATQTLLMKKSKNMLVKVDGRLQPGSTAKDIVLAVIGKIGTAGGTGYTIEFAGEAIRNLSMEGRMTLCNMAIEAGARASLVAVDETTIEYIQGRPYAPKGAAMLQALQYWRTLHSDPDAKFDAVVELRAEEIAPQVTWGTSPEMVLAISDRVPDPEKERDSNKRSAMERALQYMNLNPNTPISSIAVDKVFIGSCTNSRIEDIRAAAKVIDRLGKKVAANVKLALVVPGSGLVKAQAEREGLDRIFKAAGFEWREPGCSMCLAMNADRLEPGERCASTSNRNFEGRQGNGGRTHLVSPAMAAAAAIEGHFVDVRKIS.

[4Fe-4S] cluster-binding residues include Cys-347, Cys-410, and Cys-413.

The protein belongs to the aconitase/IPM isomerase family. LeuC type 1 subfamily. As to quaternary structure, heterodimer of LeuC and LeuD. [4Fe-4S] cluster serves as cofactor.

The catalysed reaction is (2R,3S)-3-isopropylmalate = (2S)-2-isopropylmalate. It participates in amino-acid biosynthesis; L-leucine biosynthesis; L-leucine from 3-methyl-2-oxobutanoate: step 2/4. Catalyzes the isomerization between 2-isopropylmalate and 3-isopropylmalate, via the formation of 2-isopropylmaleate. The polypeptide is 3-isopropylmalate dehydratase large subunit (Polynucleobacter necessarius subsp. necessarius (strain STIR1)).